Reading from the N-terminus, the 266-residue chain is Manganese catalase (266 aa).

Glutamate 35 lines the Mn(2+) pocket. 2 residues coordinate Ca(2+): aspartate 57 and aspartate 61. 4 residues coordinate Mn(2+): glutamate 66, histidine 69, glutamate 148, and histidine 181. Ca(2+)-binding residues include asparagine 218, serine 220, and glycine 222. A disordered region spans residues 243 to 266 (ENPEAMGGIPHIKPGDPRLHNHQG). Basic and acidic residues predominate over residues 255–266 (KPGDPRLHNHQG).

The protein belongs to the manganese catalase family. Homohexamer. It depends on Ca(2+) as a cofactor. The cofactor is Mn(2+).

The catalysed reaction is 2 H2O2 = O2 + 2 H2O. In terms of biological role, catalyzes the decomposition of hydrogen peroxide into water and oxygen. The sequence is that of Manganese catalase from Lactiplantibacillus plantarum (Lactobacillus plantarum).